A 459-amino-acid polypeptide reads, in one-letter code: Methionine aminopeptidase 2-1 (459 aa).

Residues 1–12 (MGSKSPEDHRQG) are compositionally biased toward basic and acidic residues. The interval 1–79 (MGSKSPEDHR…RKRNKKKSKK (79 aa)) is disordered. Residues 43–54 (GQDEDGDDDDDE) show a composition bias toward acidic residues. The segment covering 67–79 (KKKRKRNKKKSKK) has biased composition (basic residues). Substrate is bound at residue His210. A divalent metal cation contacts are provided by Asp231, Asp242, and His311. His319 is a substrate binding site. A divalent metal cation is bound by residues Glu344 and Glu440.

Belongs to the peptidase M24A family. Methionine aminopeptidase eukaryotic type 2 subfamily. The cofactor is Co(2+). It depends on Zn(2+) as a cofactor. Mn(2+) is required as a cofactor. Requires Fe(2+) as cofactor.

The protein resides in the cytoplasm. It carries out the reaction Release of N-terminal amino acids, preferentially methionine, from peptides and arylamides.. Functionally, cotranslationally removes the N-terminal methionine from nascent proteins. The N-terminal methionine is often cleaved when the second residue in the primary sequence is small and uncharged (Met-Ala-, Cys, Gly, Pro, Ser, Thr, or Val). The protein is Methionine aminopeptidase 2-1 of Pyrenophora tritici-repentis (strain Pt-1C-BFP) (Wheat tan spot fungus).